The primary structure comprises 664 residues: Intraflagellar transport protein 70A2 (664 aa).

7 TPR repeats span residues 11–44 (DGEFTAVVYRLIRDSRYSEAVQLLSAELQRSPRS), 45–78 (RAGLSLLAYCYYRLQEFELAAECYEQLSQMHPEL), 153–186 (PDGLVNMGCLLYKEGHYEAACSKFFAALQASGYQ), 188–220 (DVSYNLALACYSNRHYAPALKHIANIIERGIRQ), 395–423 (QVQEARHNRDDEVVIKAVNEYDETLEKYI), 424–456 (PVLMAQAKIYWNLENYQMVEKIFRKSVEFCNDH), and 458–491 (VWKLNVAHVLFMQENKYKEAIGFYEPIVKKNYDN). Positions 507–534 (YIMTSQNEEAEELMRKIEKEEEQLSYGD) form a coiled coil. Residues 543-576 (CIVNLVIGTLYCAKGNYDFGISRVIKSLEPYHKK) form a TPR 8 repeat.

Belongs to the TTC30/dfy-1/fleer family. As to quaternary structure, interacts wit the IFT B complex component IFT52.

It is found in the cell projection. The protein localises to the cilium. In terms of biological role, required for polyglutamylation of axonemal tubulin. Plays a role in anterograde intraflagellar transport (IFT), the process by which cilia precursors are transported from the base of the cilium to the site of their incorporation at the tip. The protein is Intraflagellar transport protein 70A2 (Ift70a2) of Rattus norvegicus (Rat).